A 203-amino-acid chain; its full sequence is Urease accessory protein UreG (203 aa).

Position 14–21 (14–21 (GPVGSGKT)) interacts with GTP.

The protein belongs to the SIMIBI class G3E GTPase family. UreG subfamily. In terms of assembly, homodimer. UreD, UreF and UreG form a complex that acts as a GTP-hydrolysis-dependent molecular chaperone, activating the urease apoprotein by helping to assemble the nickel containing metallocenter of UreC. The UreE protein probably delivers the nickel.

It is found in the cytoplasm. Functionally, facilitates the functional incorporation of the urease nickel metallocenter. This process requires GTP hydrolysis, probably effectuated by UreG. This chain is Urease accessory protein UreG, found in Rhizobium leguminosarum bv. trifolii (strain WSM2304).